Reading from the N-terminus, the 459-residue chain is Chromosomal replication initiator protein DnaA (459 aa).

Residues 1–83 (MKNAREIWRN…NKLEIHFIEE (83 aa)) are domain I, interacts with DnaA modulators. The segment at 83–121 (ESQAHKYAPADGSSNESIAVTETKEQPVLLPSKEEGDLG) is domain II. The tract at residues 122–338 (QLNDKYIFET…GALTRVVAYA (217 aa)) is domain III, AAA+ region. 4 residues coordinate ATP: glycine 166, glycine 168, lysine 169, and threonine 170. The segment at 339-459 (KLVGRPIDPD…IQTLKKALSN (121 aa)) is domain IV, binds dsDNA.

It belongs to the DnaA family. As to quaternary structure, oligomerizes as a right-handed, spiral filament on DNA at oriC.

Its subcellular location is the cytoplasm. Functionally, plays an essential role in the initiation and regulation of chromosomal replication. ATP-DnaA binds to the origin of replication (oriC) to initiate formation of the DNA replication initiation complex once per cell cycle. Binds the DnaA box (a 9 base pair repeat at the origin) and separates the double-stranded (ds)DNA. Forms a right-handed helical filament on oriC DNA; dsDNA binds to the exterior of the filament while single-stranded (ss)DNA is stabiized in the filament's interior. The ATP-DnaA-oriC complex binds and stabilizes one strand of the AT-rich DNA unwinding element (DUE), permitting loading of DNA polymerase. After initiation quickly degrades to an ADP-DnaA complex that is not apt for DNA replication. Binds acidic phospholipids. In Exiguobacterium sp. (strain ATCC BAA-1283 / AT1b), this protein is Chromosomal replication initiator protein DnaA.